A 197-amino-acid polypeptide reads, in one-letter code: Probable adenylyl-sulfate kinase (197 aa).

33-40 (GLSGSGKS) lines the ATP pocket. The active-site Phosphoserine intermediate is the serine 107.

This sequence belongs to the APS kinase family.

The catalysed reaction is adenosine 5'-phosphosulfate + ATP = 3'-phosphoadenylyl sulfate + ADP + H(+). Its pathway is sulfur metabolism; hydrogen sulfide biosynthesis; sulfite from sulfate: step 2/3. Catalyzes the synthesis of activated sulfate. This is Probable adenylyl-sulfate kinase (cysC) from Bacillus subtilis (strain 168).